The chain runs to 468 residues: Transmembrane protein 151A (468 aa).

The disordered stretch occupies residues 1–20 (MPEGEGGDCGEVPALVPDGE). 2 helical membrane passes run 45-65 (CLLL…CRLA) and 98-118 (YLYI…AECW). The disordered stretch occupies residues 384–438 (VSSNSLPPARPSGPRLPFSRSRLSLGAGGRTTPGVFRSLSGGPLGRRGEDTEPLE).

It belongs to the TMEM151 family. As to expression, highly expressed in the central nervous system (CNS) including the cerebral cortex, hippocampus, spinal cord, brainstem, and thalamus. Expression is relatively low during postnatal stages but highly expressed at postnatal day 14 (P14), and declined in adulthood. Also expressed in the stomach, heart, liver, spleen, lung, kidney, and muscle.

Its subcellular location is the endoplasmic reticulum membrane. The protein localises to the cell projection. The protein resides in the axon. It is found in the dendrite. The protein is Transmembrane protein 151A (Tmem151a) of Mus musculus (Mouse).